A 117-amino-acid polypeptide reads, in one-letter code: Histone-like protein Hq1 (117 aa).

Composition is skewed to basic residues over residues 1–17 and 39–50; these read MPAKKRKTTRQRRRSKA and RKLRAAQKKLAK. The segment at 1-117 is disordered; it reads MPAKKRKTTR…RGRGRPRKKA (117 aa). Positions 51–68 are enriched in basic and acidic residues; sequence AKKDASRKLAKLRKEAAR. The span at 71–117 shows a compositional bias: basic residues; the sequence is AAAKKTRAPSKKGRKKATRKKGGGRSRKTARKVSTMKRGRGRPRKKA.

In terms of biological role, binds DNA in vitro. This chain is Histone-like protein Hq1 (hcbA), found in Coxiella burnetii (strain RSA 493 / Nine Mile phase I).